The following is a 418-amino-acid chain: Putative competence-damage inducible protein (418 aa).

Belongs to the CinA family.

This is Putative competence-damage inducible protein from Clostridioides difficile (strain 630) (Peptoclostridium difficile).